The chain runs to 860 residues: Probable linoleate 9S-lipoxygenase 4 (860 aa).

Residues Asn29–Ala159 enclose the PLAT domain. One can recognise a Lipoxygenase domain in the interval Pro162–Ile860. The tract at residues Pro209 to Glu246 is disordered. His521, His526, His712, Asn716, and Ile860 together coordinate Fe cation.

It belongs to the lipoxygenase family. In terms of assembly, monomer. Fe cation serves as cofactor. In terms of tissue distribution, expressed in tubers and roots. Not detected in leaves, flowers, stems, shoot tips, or axillary buds.

It is found in the cytoplasm. It carries out the reaction (9Z,12Z)-octadecadienoate + O2 = (9S)-hydroperoxy-(10E,12Z)-octadecadienoate. The protein operates within lipid metabolism; oxylipin biosynthesis. In terms of biological role, plant lipoxygenases may be involved in a number of diverse aspects of plant physiology including growth and development, pest resistance, and senescence or responses to wounding. Catalyzes the hydroperoxidation of lipids containing a cis,cis-1,4-pentadiene structure. The polypeptide is Probable linoleate 9S-lipoxygenase 4 (LOX1.4) (Solanum tuberosum (Potato)).